The following is a 386-amino-acid chain: Bifunctional enzyme IspD/IspF (386 aa).

Residues 1–230 (MNSVPSLPGQ…LEEQSMSVIP (230 aa)) form a 2-C-methyl-D-erythritol 4-phosphate cytidylyltransferase region. The 2-C-methyl-D-erythritol 2,4-cyclodiphosphate synthase stretch occupies residues 231-386 (RTGMGFDVHR…AQAVATVVSG (156 aa)). Asp-237 and His-239 together coordinate a divalent metal cation. 4-CDP-2-C-methyl-D-erythritol 2-phosphate is bound by residues 237–239 (DVH) and 263–264 (HS). His-271 is an a divalent metal cation binding site. 4-CDP-2-C-methyl-D-erythritol 2-phosphate is bound by residues 285–287 (DIG), 361–364 (TTTE), and Arg-371.

The protein in the N-terminal section; belongs to the IspD/TarI cytidylyltransferase family. IspD subfamily. It in the C-terminal section; belongs to the IspF family. A divalent metal cation serves as cofactor.

It carries out the reaction 2-C-methyl-D-erythritol 4-phosphate + CTP + H(+) = 4-CDP-2-C-methyl-D-erythritol + diphosphate. The catalysed reaction is 4-CDP-2-C-methyl-D-erythritol 2-phosphate = 2-C-methyl-D-erythritol 2,4-cyclic diphosphate + CMP. The protein operates within isoprenoid biosynthesis; isopentenyl diphosphate biosynthesis via DXP pathway; isopentenyl diphosphate from 1-deoxy-D-xylulose 5-phosphate: step 2/6. Its pathway is isoprenoid biosynthesis; isopentenyl diphosphate biosynthesis via DXP pathway; isopentenyl diphosphate from 1-deoxy-D-xylulose 5-phosphate: step 4/6. Its function is as follows. Bifunctional enzyme that catalyzes the formation of 4-diphosphocytidyl-2-C-methyl-D-erythritol from CTP and 2-C-methyl-D-erythritol 4-phosphate (MEP) (IspD), and catalyzes the conversion of 4-diphosphocytidyl-2-C-methyl-D-erythritol 2-phosphate (CDP-ME2P) to 2-C-methyl-D-erythritol 2,4-cyclodiphosphate (ME-CPP) with a corresponding release of cytidine 5-monophosphate (CMP) (IspF). The protein is Bifunctional enzyme IspD/IspF of Novosphingobium aromaticivorans (strain ATCC 700278 / DSM 12444 / CCUG 56034 / CIP 105152 / NBRC 16084 / F199).